The sequence spans 999 residues: Golgin subfamily A member 2 (999 aa).

Pro residues predominate over residues methionine 1 to proline 11. Disordered regions lie at residues methionine 1–proline 80 and alanine 244–aspartate 288. The tract at residues methionine 1 to threonine 86 is interaction with p115/USO1. Dimethylated arginine is present on residues arginine 18 and arginine 30. Residues lysine 26–lysine 49 carry the Nuclear localization signal motif. A phosphoserine mark is found at serine 37, serine 66, serine 273, and serine 438. A coiled-coil region spans residues leucine 147–glutamate 895. Over residues threonine 271–lysine 280 the composition is skewed to polar residues. A disordered region spans residues serine 444–glutamate 468. Residues glutamate 448 to glycine 457 show a composition bias toward pro residues. Residues serine 697, serine 934, and serine 978 each carry the phosphoserine modification. An interaction with GORASP1/GRASP65 region spans residues aspartate 989–valine 999.

The protein belongs to the GOLGA2 family. In terms of assembly, homodimer, may assemble into homohexamers. Homotetramer; forms a parallel homotetramer with a flexible rod-like structure that can give rise to I- and Y-shaped conformations. Interacts with GORASP1/GRASP65. The homooligomer forms a complex with GORASP1 with a 1:1 stoichiometry. Interacts with RAB1B that has been activated by GTP-binding. Interacts with p115/USO1; interaction with p115/USO1 inhibits interaction with STX5 and/or RAB1B. Interacts with STX5. Interacts with ZFPL1. Interacts with AKAP450/AKAP9; leading to recruit AKAP450/AKAP9 to the cis-Golgi. Phosphorylated at Ser-37 by CDK1 at the onset of mitosis, inhibiting the interaction with p115/USO1 and triggering Golgi disassembly. A report however suggests that Golgi disassembly is independent of phosphorylation at Ser-37. Phosphorylated at Ser-37 in prophase as the Golgi complex starts to break down, and remains phosphorylated during further breakdown and partitioning of the Golgi fragments in metaphase and anaphase. In telophase, GM130 is dephosphorylated by PP2A as the Golgi fragments start to reassemble. In terms of processing, cleaved by caspases at the onset of apoptosis. Post-translationally, methylation by PRMT5 is required for Golgi ribbon formation. As to expression, widely expressed. Detected in brain, kidney, lung, liver, spleen, heart, skeletal muscle, thymus and pancreas. Detected in spermatocytes. Present in oocytes during all oocyte meiotic maturation (at protein level).

The protein resides in the golgi apparatus. The protein localises to the cis-Golgi network membrane. It localises to the endoplasmic reticulum-Golgi intermediate compartment membrane. It is found in the cytoplasm. Its subcellular location is the cytoskeleton. The protein resides in the spindle pole. In terms of biological role, peripheral membrane component of the cis-Golgi stack that acts as a membrane skeleton that maintains the structure of the Golgi apparatus, and as a vesicle thether that facilitates vesicle fusion to the Golgi membrane. Required for normal protein transport from the endoplasmic reticulum to the Golgi apparatus and the cell membrane. Together with p115/USO1 and STX5, involved in vesicle tethering and fusion at the cis-Golgi membrane to maintain the stacked and inter-connected structure of the Golgi apparatus. Plays a central role in mitotic Golgi disassembly: phosphorylation at Ser-37 by CDK1 at the onset of mitosis inhibits the interaction with p115/USO1, preventing tethering of COPI vesicles and thereby inhibiting transport through the Golgi apparatus during mitosis. Also plays a key role in spindle pole assembly and centrosome organization. Promotes the mitotic spindle pole assembly by activating the spindle assembly factor TPX2 to nucleate microtubules around the Golgi and capture them to couple mitotic membranes to the spindle: upon phosphorylation at the onset of mitosis, GOLGA2 interacts with importin-alpha via the nuclear localization signal region, leading to recruit importin-alpha to the Golgi membranes and liberate the spindle assembly factor TPX2 from importin-alpha. TPX2 then activates AURKA kinase and stimulates local microtubule nucleation. Upon filament assembly, nascent microtubules are further captured by GOLGA2, thus linking Golgi membranes to the spindle. Regulates the meiotic spindle pole assembly, probably via the same mechanism. Also regulates the centrosome organization. Also required for the Golgi ribbon formation and glycosylation of membrane and secretory proteins. This is Golgin subfamily A member 2 (Golga2) from Mus musculus (Mouse).